We begin with the raw amino-acid sequence, 254 residues long: Imidazole glycerol phosphate synthase subunit HisF (254 aa).

Active-site residues include aspartate 12 and aspartate 131.

Belongs to the HisA/HisF family. As to quaternary structure, heterodimer of HisH and HisF.

The protein resides in the cytoplasm. The catalysed reaction is 5-[(5-phospho-1-deoxy-D-ribulos-1-ylimino)methylamino]-1-(5-phospho-beta-D-ribosyl)imidazole-4-carboxamide + L-glutamine = D-erythro-1-(imidazol-4-yl)glycerol 3-phosphate + 5-amino-1-(5-phospho-beta-D-ribosyl)imidazole-4-carboxamide + L-glutamate + H(+). The protein operates within amino-acid biosynthesis; L-histidine biosynthesis; L-histidine from 5-phospho-alpha-D-ribose 1-diphosphate: step 5/9. Functionally, IGPS catalyzes the conversion of PRFAR and glutamine to IGP, AICAR and glutamate. The HisF subunit catalyzes the cyclization activity that produces IGP and AICAR from PRFAR using the ammonia provided by the HisH subunit. The polypeptide is Imidazole glycerol phosphate synthase subunit HisF (Janthinobacterium sp. (strain Marseille) (Minibacterium massiliensis)).